We begin with the raw amino-acid sequence, 389 residues long: MIRNGHGEAGGAKRPGPRARRAVRVWCDGCYDMVHYGHSNQLRQARAMGDHLIVGVHTDEEIAKHKGPPVFTQEERYKMVQAIKWVDEVVPAAPYVTTLETLDKYNCDFCVHGNDITLTVDGRDTYEEVKQAGRYRECKRTQGVSTTDLVGRMLLVTKAHHSSQEMSSEYREYADSFGKCPGGRNPWTGVSQFLQTSQKIIQFASGKEPQPGETVIYVAGAFDLFHIGHVDFLEKVYGLAERPYVIAGLHFDQEVNHYKGKNYPIMNLHERTLSVLACRYVSEVVIGAPYSVTAELLDHFKVDLVCHGKTEVVPDKDGSDPYEEPKRRGIFCQVDSGNDLTTDLIVQRIIKNRLEYEARNQKKEAKELAFQEAMRRQEAQPEREIDCDF.

Residues 221–222 (AF), 229–232 (HVDF), Lys259, 307–310 (HGKT), and 336–340 (SGNDL) each bind CTP. Residues Thr341 and Thr342 each carry the phosphothreonine modification.

The protein belongs to the cytidylyltransferase family.

The catalysed reaction is phosphoethanolamine + CTP + H(+) = CDP-ethanolamine + diphosphate. Its pathway is phospholipid metabolism; phosphatidylethanolamine biosynthesis; phosphatidylethanolamine from ethanolamine: step 2/3. In terms of biological role, ethanolamine-phosphate cytidylyltransferase that catalyzes the second step in the synthesis of phosphatidylethanolamine (PE) from ethanolamine via the CDP-ethanolamine pathway. Phosphatidylethanolamine is a dominant inner-leaflet phospholipid in cell membranes, where it plays a role in membrane function by structurally stabilizing membrane-anchored proteins, and participates in important cellular processes such as cell division, cell fusion, blood coagulation, and apoptosis. The protein is Ethanolamine-phosphate cytidylyltransferase (PCYT2) of Bos taurus (Bovine).